Here is a 394-residue protein sequence, read N- to C-terminus: Protein-glutamate methylesterase/protein-glutamine glutaminase 2 (394 aa).

Residues 4–121 (KVLVVDDSSF…ARNRDEAISL (118 aa)) enclose the Response regulatory domain. Asp55 carries the 4-aspartylphosphate modification. Residues 202–394 (SGKKYQLMAI…AERILVEVGR (193 aa)) form the CheB-type methylesterase domain. Residues Ser214, His241, and Asp337 contribute to the active site.

The protein belongs to the CheB family. Phosphorylated by CheA. Phosphorylation of the N-terminal regulatory domain activates the methylesterase activity.

The protein resides in the cytoplasm. It catalyses the reaction [protein]-L-glutamate 5-O-methyl ester + H2O = L-glutamyl-[protein] + methanol + H(+). The catalysed reaction is L-glutaminyl-[protein] + H2O = L-glutamyl-[protein] + NH4(+). Functionally, involved in chemotaxis. Part of a chemotaxis signal transduction system that modulates chemotaxis in response to various stimuli. Catalyzes the demethylation of specific methylglutamate residues introduced into the chemoreceptors (methyl-accepting chemotaxis proteins or MCP) by CheR. Also mediates the irreversible deamidation of specific glutamine residues to glutamic acid. The polypeptide is Protein-glutamate methylesterase/protein-glutamine glutaminase 2 (Photobacterium profundum (strain SS9)).